A 69-amino-acid chain; its full sequence is MPLTVKCPICKAPVEWVPQSAFKPFCSERCKLIDLGDWASEKHVIPVKAEFDPEAFDEFDLDEGDFFKE.

C7, C10, C26, and C30 together coordinate Zn(2+).

The protein belongs to the DNA gyrase inhibitor YacG family. Interacts with GyrB. Zn(2+) is required as a cofactor.

In terms of biological role, inhibits all the catalytic activities of DNA gyrase by preventing its interaction with DNA. Acts by binding directly to the C-terminal domain of GyrB, which probably disrupts DNA binding by the gyrase. In Shewanella baltica (strain OS155 / ATCC BAA-1091), this protein is DNA gyrase inhibitor YacG.